The sequence spans 342 residues: Glycerol-3-phosphate dehydrogenase [NAD(P)+] (342 aa).

NADPH is bound by residues Ser13, Trp14, and Lys108. Lys108, Gly139, and Ser141 together coordinate sn-glycerol 3-phosphate. Residue Ala143 participates in NADPH binding. Positions 194, 247, 257, 258, and 259 each coordinate sn-glycerol 3-phosphate. Lys194 (proton acceptor) is an active-site residue. Arg258 lines the NADPH pocket. 2 residues coordinate NADPH: Val282 and Glu284.

This sequence belongs to the NAD-dependent glycerol-3-phosphate dehydrogenase family.

The protein resides in the cytoplasm. The enzyme catalyses sn-glycerol 3-phosphate + NAD(+) = dihydroxyacetone phosphate + NADH + H(+). The catalysed reaction is sn-glycerol 3-phosphate + NADP(+) = dihydroxyacetone phosphate + NADPH + H(+). It functions in the pathway membrane lipid metabolism; glycerophospholipid metabolism. In terms of biological role, catalyzes the reduction of the glycolytic intermediate dihydroxyacetone phosphate (DHAP) to sn-glycerol 3-phosphate (G3P), the key precursor for phospholipid synthesis. This Lactococcus lactis subsp. cremoris (strain MG1363) protein is Glycerol-3-phosphate dehydrogenase [NAD(P)+].